A 583-amino-acid polypeptide reads, in one-letter code: Probable lysosomal cobalamin transporter (583 aa).

Transmembrane regions (helical) follow at residues 8–28 (LIWAVYAIVVAILAAVASVFI), 41–61 (VILTCIVAVTTLLATVLLVPV), 95–115 (IVYYFLYSLDALLCLIVIPFI), 145–165 (TVSFLAIVVVLFLVGFFVPVA), 188–208 (ALTFALGLLITIGLCLYVLYT), 312–332 (LLSGVIFSLLALIIWISMLLT), 347–367 (GYILGHINVFNPINWVFVQSA), 375–395 (VIFTLLVLFLFSSSIVGISAV), 418–438 (LLATAMLMLIILALNYSTSMI), and 506–526 (FFGAIFFWAQFAFLGIYLLVM). A compositionally biased stretch (acidic residues) spans 541-552 (LDEDAEEAEEES). The segment at 541-562 (LDEDAEEAEEESLLANTRGRAE) is disordered.

It belongs to the LIMR family. LMBRD1 subfamily.

The protein resides in the lysosome membrane. In terms of biological role, probable lysosomal cobalamin transporter. Required to export cobalamin from lysosomes allowing its conversion to cofactors. The sequence is that of Probable lysosomal cobalamin transporter from Aspergillus oryzae (strain ATCC 42149 / RIB 40) (Yellow koji mold).